A 261-amino-acid polypeptide reads, in one-letter code: Flagellar L-ring protein (261 aa).

Residues 1–15 (MKRLLCLLLLTTLTG) form the signal peptide. The N-palmitoyl cysteine moiety is linked to residue Cys16. A lipid anchor (S-diacylglycerol cysteine) is attached at Cys16. Residues 121 to 133 (KSADAELSKKNDS) show a composition bias toward basic and acidic residues. Positions 121–140 (KSADAELSKKNDSSMDPLQV) are disordered.

This sequence belongs to the FlgH family. In terms of assembly, the basal body constitutes a major portion of the flagellar organelle and consists of four rings (L,P,S, and M) mounted on a central rod.

Its subcellular location is the cell outer membrane. It localises to the bacterial flagellum basal body. Its function is as follows. Assembles around the rod to form the L-ring and probably protects the motor/basal body from shearing forces during rotation. This chain is Flagellar L-ring protein, found in Aliivibrio salmonicida (strain LFI1238) (Vibrio salmonicida (strain LFI1238)).